A 694-amino-acid polypeptide reads, in one-letter code: Elongation factor G (694 aa).

The tr-type G domain occupies 9-288 (SKIRNIGIMA…VIVKWLPSPK (280 aa)). GTP-binding positions include 18–25 (AHIDAGKT), 82–86 (DTPGH), and 136–139 (NKMD).

Belongs to the TRAFAC class translation factor GTPase superfamily. Classic translation factor GTPase family. EF-G/EF-2 subfamily.

The protein localises to the cytoplasm. Catalyzes the GTP-dependent ribosomal translocation step during translation elongation. During this step, the ribosome changes from the pre-translocational (PRE) to the post-translocational (POST) state as the newly formed A-site-bound peptidyl-tRNA and P-site-bound deacylated tRNA move to the P and E sites, respectively. Catalyzes the coordinated movement of the two tRNA molecules, the mRNA and conformational changes in the ribosome. The polypeptide is Elongation factor G (Chlamydia felis (strain Fe/C-56) (Chlamydophila felis)).